The primary structure comprises 199 residues: Charged multivesicular body protein 1b (199 aa).

Coiled-coil stretches lie at residues 15 to 42 (AKEL…AIQK) and 178 to 199 (TSVA…RDQV). Residues 167–199 (ELPQGQTGSVGTSVASTEQDELSQRLARLRDQV) form a disordered region. Residues 170 to 183 (QGQTGSVGTSVAST) are compositionally biased toward polar residues. The short motif at 186-196 (DELSQRLARLR) is the MIT-interacting motif element.

This sequence belongs to the SNF7 family.

The protein localises to the cytoplasm. It localises to the cytosol. The protein resides in the endosome. It is found in the late endosome membrane. Functionally, probable peripherally associated component of the endosomal sorting required for transport complex III (ESCRT-III) which is involved in multivesicular bodies (MVBs) formation and sorting of endosomal cargo proteins into MVBs. MVBs contain intraluminal vesicles (ILVs) that are generated by invagination and scission from the limiting membrane of the endosome and mostly are delivered to lysosomes enabling degradation of membrane proteins, such as stimulated growth factor receptors, lysosomal enzymes and lipids. The polypeptide is Charged multivesicular body protein 1b (chmp1b) (Xenopus tropicalis (Western clawed frog)).